The chain runs to 31 residues: GTVPCGESCVFIPCITGIAGCSCKNKVCYLN.

The segment at residues 1–31 is a cross-link (cyclopeptide (Gly-Asn)); the sequence is GTVPCGESCVFIPCITGIAGCSCKNKVCYLN. Intrachain disulfides connect Cys-5–Cys-21, Cys-9–Cys-23, and Cys-14–Cys-28.

Contains 3 disulfide bonds. In terms of processing, this is a cyclic peptide. As to expression, expressed in root nodules but not in seed.

Functionally, probably participates in a plant defense mechanism. The polypeptide is Cliotide T17 (Clitoria ternatea (Butterfly pea)).